A 597-amino-acid polypeptide reads, in one-letter code: Centrosomal protein of 70 kDa (597 aa).

The tract at residues 1–23 (MFPVAPKPQDSSQASDRLMTEKQ) is disordered. 2 coiled-coil regions span residues 66–179 (MRQN…QMEV) and 254–326 (TYKG…KKAE). A TPR repeat occupies 483 to 516 (NGVYPRMNEVYTRLGEMNNAVRNLQELLELDSSS).

As to quaternary structure, directly interacts with tubulin-gamma; this interaction determines centrosomal localization.

The protein localises to the cytoplasm. It is found in the cytoskeleton. The protein resides in the microtubule organizing center. Its subcellular location is the centrosome. In terms of biological role, plays a role in the organization of both preexisting and nascent microtubules in interphase cells. During mitosis, required for the organization and orientation of the mitotic spindle. The chain is Centrosomal protein of 70 kDa (CEP70) from Pongo abelii (Sumatran orangutan).